The primary structure comprises 158 residues: Large ribosomal subunit protein uL16 (158 aa).

This sequence belongs to the universal ribosomal protein uL16 family. In terms of assembly, part of the 50S ribosomal subunit.

Binds 23S rRNA and is also seen to make contacts with the A and possibly P site tRNAs. The chain is Large ribosomal subunit protein uL16 from Synechococcus sp. (strain CC9605).